Reading from the N-terminus, the 263-residue chain is uncharacterized protein (263 aa).

Belongs to the AtsA family.

The protein localises to the plastid. It is found in the chloroplast. This is an uncharacterized protein from Porphyra purpurea (Red seaweed).